The following is a 20-amino-acid chain: 39 kDa major outer membrane protein (20 aa).

The protein resides in the cell outer membrane. This Aggregatibacter actinomycetemcomitans (Actinobacillus actinomycetemcomitans) protein is 39 kDa major outer membrane protein.